Reading from the N-terminus, the 488-residue chain is 3-octaprenyl-4-hydroxybenzoate carboxy-lyase (488 aa).

Asn-172 serves as a coordination point for Mn(2+). Prenylated FMN-binding positions include 175 to 177 (IYR), 189 to 191 (RWL), and 194 to 195 (RG). Position 238 (Glu-238) interacts with Mn(2+). Asp-287 acts as the Proton donor in catalysis.

The protein belongs to the UbiD family. As to quaternary structure, homohexamer. The cofactor is prenylated FMN. It depends on Mn(2+) as a cofactor.

The protein localises to the cell membrane. The catalysed reaction is a 4-hydroxy-3-(all-trans-polyprenyl)benzoate + H(+) = a 2-(all-trans-polyprenyl)phenol + CO2. It functions in the pathway cofactor biosynthesis; ubiquinone biosynthesis. Functionally, catalyzes the decarboxylation of 3-octaprenyl-4-hydroxy benzoate to 2-octaprenylphenol, an intermediate step in ubiquinone biosynthesis. The chain is 3-octaprenyl-4-hydroxybenzoate carboxy-lyase from Stutzerimonas stutzeri (strain A1501) (Pseudomonas stutzeri).